The following is an 80-amino-acid chain: Putative membrane protein insertion efficiency factor (80 aa).

This sequence belongs to the UPF0161 family.

The protein resides in the cell inner membrane. Functionally, could be involved in insertion of integral membrane proteins into the membrane. The polypeptide is Putative membrane protein insertion efficiency factor (Picosynechococcus sp. (strain ATCC 27264 / PCC 7002 / PR-6) (Agmenellum quadruplicatum)).